Here is a 373-residue protein sequence, read N- to C-terminus: Chorismate synthase (373 aa).

Residue Arg-46 participates in NADP(+) binding. Residues 123–125 (RSS), 251–252 (NA), Gly-295, 310–314 (KPTPS), and Arg-337 contribute to the FMN site.

This sequence belongs to the chorismate synthase family. It depends on FMNH2 as a cofactor.

It carries out the reaction 5-O-(1-carboxyvinyl)-3-phosphoshikimate = chorismate + phosphate. The protein operates within metabolic intermediate biosynthesis; chorismate biosynthesis; chorismate from D-erythrose 4-phosphate and phosphoenolpyruvate: step 7/7. In terms of biological role, catalyzes the anti-1,4-elimination of the C-3 phosphate and the C-6 proR hydrogen from 5-enolpyruvylshikimate-3-phosphate (EPSP) to yield chorismate, which is the branch point compound that serves as the starting substrate for the three terminal pathways of aromatic amino acid biosynthesis. This reaction introduces a second double bond into the aromatic ring system. The chain is Chorismate synthase from Methanococcus maripaludis (strain C7 / ATCC BAA-1331).